We begin with the raw amino-acid sequence, 362 residues long: Ferrochelatase (362 aa).

Fe cation contacts are provided by His212 and Glu294.

Belongs to the ferrochelatase family.

It is found in the cytoplasm. It carries out the reaction heme b + 2 H(+) = protoporphyrin IX + Fe(2+). The protein operates within porphyrin-containing compound metabolism; protoheme biosynthesis; protoheme from protoporphyrin-IX: step 1/1. Catalyzes the ferrous insertion into protoporphyrin IX. This chain is Ferrochelatase, found in Leptospira biflexa serovar Patoc (strain Patoc 1 / Ames).